The following is a 169-amino-acid chain: Large ribosomal subunit protein uL10 (169 aa).

The protein belongs to the universal ribosomal protein uL10 family. In terms of assembly, part of the ribosomal stalk of the 50S ribosomal subunit. The N-terminus interacts with L11 and the large rRNA to form the base of the stalk. The C-terminus forms an elongated spine to which L12 dimers bind in a sequential fashion forming a multimeric L10(L12)X complex.

Its function is as follows. Forms part of the ribosomal stalk, playing a central role in the interaction of the ribosome with GTP-bound translation factors. The chain is Large ribosomal subunit protein uL10 from Rickettsia akari (strain Hartford).